The chain runs to 448 residues: L-seryl-tRNA(Sec) selenium transferase (448 aa).

N6-(pyridoxal phosphate)lysine is present on lysine 284.

Belongs to the SelA family. Pyridoxal 5'-phosphate serves as cofactor.

The protein localises to the cytoplasm. It carries out the reaction L-seryl-tRNA(Sec) + selenophosphate + H(+) = L-selenocysteinyl-tRNA(Sec) + phosphate. The protein operates within aminoacyl-tRNA biosynthesis; selenocysteinyl-tRNA(Sec) biosynthesis; selenocysteinyl-tRNA(Sec) from L-seryl-tRNA(Sec) (bacterial route): step 1/1. In terms of biological role, converts seryl-tRNA(Sec) to selenocysteinyl-tRNA(Sec) required for selenoprotein biosynthesis. This Nautilia profundicola (strain ATCC BAA-1463 / DSM 18972 / AmH) protein is L-seryl-tRNA(Sec) selenium transferase.